The primary structure comprises 527 residues: Probable protein kinase UbiB (527 aa).

Positions 118–501 constitute a Protein kinase domain; the sequence is DFERVPVASA…QKRTNRLLQG (384 aa). ATP is bound by residues 124–132 and lysine 150; that span reads VASASIAQV. The active-site Proton acceptor is aspartate 285. A helical transmembrane segment spans residues 502-522; the sequence is LLMFGVAVGVGAVLARAWLAI.

Belongs to the ABC1 family. UbiB subfamily.

It localises to the cell inner membrane. Its pathway is cofactor biosynthesis; ubiquinone biosynthesis [regulation]. In terms of biological role, is probably a protein kinase regulator of UbiI activity which is involved in aerobic coenzyme Q (ubiquinone) biosynthesis. The polypeptide is Probable protein kinase UbiB (Paraburkholderia phymatum (strain DSM 17167 / CIP 108236 / LMG 21445 / STM815) (Burkholderia phymatum)).